A 332-amino-acid chain; its full sequence is MQAYESGDERGLIYGYVLNGRGGGRRVGRNQIAVLDLLPEESLWLHWDRGVPEAQAWLRDSAGLSEFACDLLLEEATRPRLLDLGAESLLVFLRGVNLNPGAEPEDMVSLRVFADARRVISLRLRPLKAVADLLEDLEAGKGPKTASEVVYYLAHYLTDRVDTLISGIADQLDAVEELVEADERASPDQHQLRTLRRRSAGLRRYLAPQRDIYSQLARYKLSWFVEDDADYWNELNNRLTRNLEELELIRERISVLQEAESRRITERMNRTMYLLGIITGFFLPMSFVTGLLGINVGGIPGADAPHGFWLACLLIGGVATFQWWVFRRLRWL.

Residues 1-277 (MQAYESGDER…MNRTMYLLGI (277 aa)) lie on the Cytoplasmic side of the membrane. Residues 278 to 286 (ITGFFLPMS) traverse the membrane as a helical segment. Residues 287–307 (FVTGLLGINVGGIPGADAPHG) are Periplasmic-facing. A helical transmembrane segment spans residues 308–323 (FWLACLLIGGVATFQW). The Cytoplasmic segment spans residues 324–332 (WVFRRLRWL).

Belongs to the CorA metal ion transporter (MIT) (TC 1.A.35) family. Homopentamer.

Its subcellular location is the cell inner membrane. The catalysed reaction is Zn(2+)(in) = Zn(2+)(out). The enzyme catalyses Cd(2+)(in) = Cd(2+)(out). It catalyses the reaction Ni(2+)(in) = Ni(2+)(out). It carries out the reaction Co(2+)(in) = Co(2+)(out). Its function is as follows. Transports divalent cations including Zn(2+), Cd(2+), Ni(2+) and Co(2+). The proton gradient has a small influence on transport suggesting that the transport is probably not proton-dependent. This is Divalent cation transporter CmaX from Pseudomonas aeruginosa (strain ATCC 15692 / DSM 22644 / CIP 104116 / JCM 14847 / LMG 12228 / 1C / PRS 101 / PAO1).